We begin with the raw amino-acid sequence, 183 residues long: Threonylcarbamoyl-AMP synthase (183 aa).

A YrdC-like domain is found at 1–183 (MNFTEIAEKL…LLTDQLIREG (183 aa)).

The protein belongs to the SUA5 family. TsaC subfamily.

The protein localises to the cytoplasm. The catalysed reaction is L-threonine + hydrogencarbonate + ATP = L-threonylcarbamoyladenylate + diphosphate + H2O. In terms of biological role, required for the formation of a threonylcarbamoyl group on adenosine at position 37 (t(6)A37) in tRNAs that read codons beginning with adenine. Catalyzes the conversion of L-threonine, HCO(3)(-)/CO(2) and ATP to give threonylcarbamoyl-AMP (TC-AMP) as the acyladenylate intermediate, with the release of diphosphate. This Actinobacillus succinogenes (strain ATCC 55618 / DSM 22257 / CCUG 43843 / 130Z) protein is Threonylcarbamoyl-AMP synthase.